The primary structure comprises 79 residues: Serine protease inhibitor Kazal-type 1 (79 aa).

A signal peptide spans 1 to 23; the sequence is MKVTGIFLLSALALLSLSGNTGA. Residues 26-79 form the Kazal-like domain; it reads LGREAKCYNELNGCTKIYDPVCGTDGNTYPNECVLCFENRKRQTSILIQKSGPC. 3 disulfides stabilise this stretch: cysteine 32-cysteine 61, cysteine 39-cysteine 58, and cysteine 47-cysteine 79.

The protein resides in the secreted. In terms of biological role, serine protease inhibitor which exhibits anti-trypsin activity. In the pancreas, protects against trypsin-catalyzed premature activation of zymogens. In the male reproductive tract, binds to sperm heads where it modulates sperm capacitance by inhibiting calcium uptake and nitrogen oxide (NO) production. In Homo sapiens (Human), this protein is Serine protease inhibitor Kazal-type 1 (SPINK1).